A 985-amino-acid chain; its full sequence is Bifunctional glutamine synthetase adenylyltransferase/adenylyl-removing enzyme (985 aa).

Residues 1–472 (MTSSAPGNAD…HYARLFEGDP (472 aa)) form an adenylyl removase region. The interval 477-985 (SLPPVNYGAG…RRVFTSLLEE (509 aa)) is adenylyl transferase.

This sequence belongs to the GlnE family. Requires Mg(2+) as cofactor.

The catalysed reaction is [glutamine synthetase]-O(4)-(5'-adenylyl)-L-tyrosine + phosphate = [glutamine synthetase]-L-tyrosine + ADP. The enzyme catalyses [glutamine synthetase]-L-tyrosine + ATP = [glutamine synthetase]-O(4)-(5'-adenylyl)-L-tyrosine + diphosphate. Involved in the regulation of glutamine synthetase GlnA, a key enzyme in the process to assimilate ammonia. When cellular nitrogen levels are high, the C-terminal adenylyl transferase (AT) inactivates GlnA by covalent transfer of an adenylyl group from ATP to specific tyrosine residue of GlnA, thus reducing its activity. Conversely, when nitrogen levels are low, the N-terminal adenylyl removase (AR) activates GlnA by removing the adenylyl group by phosphorolysis, increasing its activity. The regulatory region of GlnE binds the signal transduction protein PII (GlnB) which indicates the nitrogen status of the cell. In Bradyrhizobium sp. (strain BTAi1 / ATCC BAA-1182), this protein is Bifunctional glutamine synthetase adenylyltransferase/adenylyl-removing enzyme.